The primary structure comprises 108 residues: uncharacterized protein (108 aa).

Residues 1–23 (MVDELEKNQVQPQETEENKENAL) form a disordered region.

This is an uncharacterized protein from Ureaplasma parvum serovar 3 (strain ATCC 700970).